The following is a 517-amino-acid chain: Argininosuccinate lyase, chloroplastic (517 aa).

The transit peptide at 1 to 45 (MGAIDLSFSQSLLFSSSRSNLSSSTHRSVSFLPPGSKSRCLPPLR) directs the protein to the chloroplast. 2-(N(omega)-L-arginino)succinate is bound by residues S79, N166, and T211. H212 serves as the catalytic Proton acceptor. Catalysis depends on S333, which acts as the Proton donor. The 2-(N(omega)-L-arginino)succinate site is built by N341, Y373, Q378, and K381.

Belongs to the lyase 1 family. Argininosuccinate lyase subfamily.

Its subcellular location is the plastid. The protein localises to the chloroplast. It carries out the reaction 2-(N(omega)-L-arginino)succinate = fumarate + L-arginine. Its pathway is amino-acid biosynthesis; L-arginine biosynthesis; L-arginine from L-ornithine and carbamoyl phosphate: step 3/3. The protein is Argininosuccinate lyase, chloroplastic of Arabidopsis thaliana (Mouse-ear cress).